Consider the following 265-residue polypeptide: UDP-N-acetylenolpyruvoylglucosamine reductase (265 aa).

Residues 15-169 (GVGGPAELWT…TRVRLKLKER (155 aa)) enclose the FAD-binding PCMH-type domain. Arg-149 is a catalytic residue. A disordered region spans residues 182–203 (DRARKGQPKRKSAGCAFKNPPG). The active-site Proton donor is the Cys-196.

The protein belongs to the MurB family. It depends on FAD as a cofactor.

It is found in the cytoplasm. The catalysed reaction is UDP-N-acetyl-alpha-D-muramate + NADP(+) = UDP-N-acetyl-3-O-(1-carboxyvinyl)-alpha-D-glucosamine + NADPH + H(+). The protein operates within cell wall biogenesis; peptidoglycan biosynthesis. Functionally, cell wall formation. This is UDP-N-acetylenolpyruvoylglucosamine reductase from Thermus thermophilus (strain ATCC BAA-163 / DSM 7039 / HB27).